Consider the following 196-residue polypeptide: Probable malonic semialdehyde reductase RutE (196 aa).

It belongs to the nitroreductase family. HadB/RutE subfamily. Requires FMN as cofactor.

It catalyses the reaction 3-hydroxypropanoate + NADP(+) = 3-oxopropanoate + NADPH + H(+). Its function is as follows. May reduce toxic product malonic semialdehyde to 3-hydroxypropionic acid, which is excreted. The polypeptide is Probable malonic semialdehyde reductase RutE (Klebsiella pneumoniae subsp. pneumoniae (strain ATCC 700721 / MGH 78578)).